Consider the following 139-residue polypeptide: ATP synthase epsilon chain (139 aa).

Belongs to the ATPase epsilon chain family. F-type ATPases have 2 components, CF(1) - the catalytic core - and CF(0) - the membrane proton channel. CF(1) has five subunits: alpha(3), beta(3), gamma(1), delta(1), epsilon(1). CF(0) has three main subunits: a, b and c.

Its subcellular location is the cell inner membrane. Functionally, produces ATP from ADP in the presence of a proton gradient across the membrane. The chain is ATP synthase epsilon chain from Escherichia coli O139:H28 (strain E24377A / ETEC).